The primary structure comprises 339 residues: Dual specificity protein phosphatase 12 (339 aa).

Position 1 is an N-acetylmethionine (methionine 1). A compositionally biased stretch (polar residues) spans 1 to 22 (MLEVQSSNHGCERQAPTTSPAS). Residues 1–25 (MLEVQSSNHGCERQAPTTSPASSAG) are disordered. In terms of domain architecture, Tyrosine-protein phosphatase spans 26 to 170 (HAVEVRPGLY…LKLYEAMGHE (145 aa)). Cysteine 114 (phosphocysteine intermediate) is an active-site residue. Position 115–120 (115–120 (HAGVSR)) interacts with substrate. The residue at position 334 (serine 334) is a Phosphoserine.

This sequence belongs to the protein-tyrosine phosphatase family. Non-receptor class dual specificity subfamily. Monomer. Requires Zn(2+) as cofactor.

Its subcellular location is the nucleus. The protein resides in the cytoplasm. The protein localises to the cytosol. The enzyme catalyses O-phospho-L-tyrosyl-[protein] + H2O = L-tyrosyl-[protein] + phosphate. The catalysed reaction is O-phospho-L-seryl-[protein] + H2O = L-seryl-[protein] + phosphate. It carries out the reaction O-phospho-L-threonyl-[protein] + H2O = L-threonyl-[protein] + phosphate. Its function is as follows. Dual specificity phosphatase; can dephosphorylate both phosphotyrosine and phosphoserine or phosphothreonine residues. Can dephosphorylate glucokinase (in vitro). Has phosphatase activity with the synthetic substrate 6,8-difluoro-4-methylumbelliferyl phosphate and other in vitro substrates. The chain is Dual specificity protein phosphatase 12 (Dusp12) from Rattus norvegicus (Rat).